The sequence spans 492 residues: Probable cobyric acid synthase (492 aa).

Positions 252–444 (PIEVNVVKFS…FHGILENFEF (193 aa)) constitute a GATase cobBQ-type domain. Cys330 (nucleophile) is an active-site residue. His436 is an active-site residue.

It belongs to the CobB/CobQ family. CobQ subfamily.

It participates in cofactor biosynthesis; adenosylcobalamin biosynthesis. Functionally, catalyzes amidations at positions B, D, E, and G on adenosylcobyrinic A,C-diamide. NH(2) groups are provided by glutamine, and one molecule of ATP is hydrogenolyzed for each amidation. This chain is Probable cobyric acid synthase, found in Methanococcus maripaludis (strain DSM 14266 / JCM 13030 / NBRC 101832 / S2 / LL).